A 663-amino-acid chain; its full sequence is Nuclear receptor-binding protein homolog (663 aa).

The span at 1 to 14 (MSNSQANAGSSGSA) shows a compositional bias: low complexity. Positions 1–112 (MSNSQANAGS…SEDESEILEE (112 aa)) are disordered. Over residues 19–46 (LNPSGSATLVPNLTTTNASSQATPASTI) the composition is skewed to polar residues. 2 stretches are compositionally biased toward low complexity: residues 47–57 (PQQQQPQQSQP) and 81–94 (VVVAGGSEGVNLDS). The segment covering 101 to 111 (DDSEDESEILE) has biased composition (acidic residues). One can recognise a Protein kinase domain in the interval 122–392 (REEVDQRDVP…ANDLLFHPLL (271 aa)). Disordered regions lie at residues 481-505 (PNFRSRAASPERADSVKSATPEPVD) and 638-663 (YVPQDQQQYQQQQQEADVDQSGTTSN). Residues S489, S495, and S498 each carry the phosphoserine modification. Position 500 is a phosphothreonine (T500). Positions 641 to 652 (QDQQQYQQQQQE) are enriched in low complexity.

It belongs to the protein kinase superfamily. Ser/Thr protein kinase family.

Its subcellular location is the cytoplasm. The protein resides in the cell cortex. Its function is as follows. May play a role in subcellular trafficking between the endoplasmic reticulum and Golgi apparatus. The protein is Nuclear receptor-binding protein homolog of Drosophila pseudoobscura pseudoobscura (Fruit fly).